The sequence spans 204 residues: FMN-dependent NADH:quinone oxidoreductase (204 aa).

FMN is bound by residues Ser-10 and 16–18 (SKS).

Belongs to the azoreductase type 1 family. In terms of assembly, homodimer. It depends on FMN as a cofactor.

It carries out the reaction 2 a quinone + NADH + H(+) = 2 a 1,4-benzosemiquinone + NAD(+). The catalysed reaction is N,N-dimethyl-1,4-phenylenediamine + anthranilate + 2 NAD(+) = 2-(4-dimethylaminophenyl)diazenylbenzoate + 2 NADH + 2 H(+). Quinone reductase that provides resistance to thiol-specific stress caused by electrophilic quinones. In terms of biological role, also exhibits azoreductase activity. Catalyzes the reductive cleavage of the azo bond in aromatic azo compounds to the corresponding amines. This Ruegeria pomeroyi (strain ATCC 700808 / DSM 15171 / DSS-3) (Silicibacter pomeroyi) protein is FMN-dependent NADH:quinone oxidoreductase.